The sequence spans 253 residues: Short-chain dehydrogenase/reductase ATR9 (253 aa).

NADP(+)-binding residues include serine 15, serine 16, isoleucine 18, serine 38, asparagine 39, arginine 42, aspartate 65, and lysine 129. Serine 147 serves as the catalytic Proton donor. Threonine 194 serves as a coordination point for NADP(+).

Belongs to the short-chain dehydrogenases/reductases (SDR) family.

Its pathway is mycotoxin biosynthesis. Its function is as follows. Short-chain dehydrogenase/reductase; part of the core atranone cluster (CAC) which products are predicted to catalyze most or all steps of mycotoxin atranone synthesis, starting from geranylgeranyl pyrophosphate (GGPP). The initial cyclization of GGPP to dolabellane is probably performed by the terpene cyclase ATR13. The Baeyer-Villiger oxidation near the end of the atranone synthesis, which converts atranones D and E to atranones F and G is predicted to be catalyzed by the monooxygenase ATR8. Of the CAC's other predicted gene products, the reducing PKS ATR6 might synthesize a polyketide chain. This polyketide is probably transferred onto the atranone backbone by the polyketide transferase ATR5. Other predicted CAC products include 4 oxygenases (ATR2, ATR3, ATR4, and ATR14), 3 short-chain reductases (ATR7, ATR9, and ATR10), and a methyltransferase (ATR12). These may all be involved in the various steps of atranone biosynthesis, although their specific roles must await experimental determination. The protein is Short-chain dehydrogenase/reductase ATR9 of Stachybotrys chlorohalonatus (strain IBT 40285).